The following is a 573-amino-acid chain: Diflavin flavoprotein A 1 (573 aa).

The zinc metallo-hydrolase stretch occupies residues 43-236 (QNGTTYNSYL…GTISTVANGH (194 aa)). Fe cation-binding residues include histidine 92, glutamate 94, aspartate 96, histidine 159, aspartate 178, and histidine 236. A Flavodoxin-like domain is found at 265-401 (VVVFYVADYG…LCDESGTDLG (137 aa)). The tract at residues 424-573 (IGRISGGLYI…VHHRKVGNYY (150 aa)) is flavodoxin-reductase-like.

The protein in the N-terminal section; belongs to the zinc metallo-hydrolase group 3 family. It in the C-terminal section; belongs to the flavodoxin reductase family. In terms of assembly, homodimer. Requires Fe cation as cofactor. FAD is required as a cofactor. FMN serves as cofactor.

Its function is as follows. Mediates electron transfer from NADH to oxygen, reducing it to water. This modular protein has 3 redox cofactors, in other organisms the same activity requires 2 or 3 proteins. This is Diflavin flavoprotein A 1 (dfa1) from Synechocystis sp. (strain ATCC 27184 / PCC 6803 / Kazusa).